We begin with the raw amino-acid sequence, 67 residues long: Gallinacin-6 (67 aa).

The first 19 residues, 1-19 (MRILYLLLSVLFVVLQGVA), serve as a signal peptide directing secretion. Positions 20–25 (GQPYFS) are excised as a propeptide. Intrachain disulfides connect Cys31–Cys60, Cys38–Cys53, and Cys43–Cys61.

The protein belongs to the beta-defensin family. In terms of tissue distribution, expressed in bone marrow, testis, ovary, lung and trachea. Expressed in the ovarian stroma, but not in the ovarian follicles.

The protein resides in the secreted. The protein localises to the cytoplasmic granule. Has bactericidal activity. Potent activity against S.typhimurium and S.entiriditis. This Gallus gallus (Chicken) protein is Gallinacin-6 (GAL6).